A 472-amino-acid polypeptide reads, in one-letter code: Ribosomal protein uS12 methylthiotransferase RimO (472 aa).

An MTTase N-terminal domain is found at 22–133; the sequence is PSVAFAHLGC…IVDVLKRVEA (112 aa). [4Fe-4S] cluster-binding residues include Cys-31, Cys-67, Cys-96, Cys-171, Cys-175, and Cys-178. The Radical SAM core domain occupies 157-386; sequence TTDQAVAYLK…MALQQPISAE (230 aa). The 72-residue stretch at 389–460 folds into the TRAM domain; it reads QRWVGRTIDV…VYDLTGQLVD (72 aa).

It belongs to the methylthiotransferase family. RimO subfamily. [4Fe-4S] cluster serves as cofactor.

The protein localises to the cytoplasm. It catalyses the reaction L-aspartate(89)-[ribosomal protein uS12]-hydrogen + (sulfur carrier)-SH + AH2 + 2 S-adenosyl-L-methionine = 3-methylsulfanyl-L-aspartate(89)-[ribosomal protein uS12]-hydrogen + (sulfur carrier)-H + 5'-deoxyadenosine + L-methionine + A + S-adenosyl-L-homocysteine + 2 H(+). Functionally, catalyzes the methylthiolation of an aspartic acid residue of ribosomal protein uS12. This chain is Ribosomal protein uS12 methylthiotransferase RimO, found in Prochlorococcus marinus (strain MIT 9303).